Reading from the N-terminus, the 164-residue chain is RNA pyrophosphohydrolase (164 aa).

The Nudix hydrolase domain maps to 12–158 (RYRQCAGVML…KREVYRAVVK (147 aa)). Residues 47-68 (GGIDPGETQQEAAMRELEEETG) carry the Nudix box motif.

The protein belongs to the Nudix hydrolase family. RppH subfamily. The cofactor is a divalent metal cation.

Its function is as follows. Accelerates the degradation of transcripts by removing pyrophosphate from the 5'-end of triphosphorylated RNA, leading to a more labile monophosphorylated state that can stimulate subsequent ribonuclease cleavage. The sequence is that of RNA pyrophosphohydrolase from Erythrobacter litoralis (strain HTCC2594).